We begin with the raw amino-acid sequence, 523 residues long: MSQQVIIFDTTLRDGEQALQASLSVKEKLQIALALERMGVDVMEVGFPVSSPGDFESVQTIARQVKNSRVCALARCVEKDIDVAAESLKVAEAFRIHTFIATSPMHIATKLRSTLDEVIERAIYMVKRARNYTDDVEFSCEDAGRTPIADLARVVEAAINAGATTINIPDTVGYTMPFEFAGIISGLYERVPNIDKAIISVHTHDDLGLAVGNSLAAVHAGARQVEGAMNGIGERAGNCSLEEVIMAIKVRKDILNVHTAINHQEIWRTSQLVSQICNMPIPANKAIVGSGAFAHSSGIHQDGVLKNRENYEIMTPESIGLNQIQLNLTSRSGRAAVKHRMDEMGYKESEYNLDNLYDAFLKLADKKGQVFDYDLEALAFIGKQQEEPEHFRLDYFSVQSGSNDIATAAVKLACGEEVKAEAANGNGPVDAVYQAINRITDYNVELVKYSLTAKGHGKDALGQVDIVANYNGRRFHGVGLATDIVESSAKAMVHVLNNIWRAAEVEKELQRKAQHNENNKETV.

The Pyruvate carboxyltransferase domain maps to 5–267 (VIIFDTTLRD…HTAINHQEIW (263 aa)). 4 residues coordinate Mn(2+): Asp-14, His-202, His-204, and Asn-238. The regulatory domain stretch occupies residues 392–523 (RLDYFSVQSG…QHNENNKETV (132 aa)).

The protein belongs to the alpha-IPM synthase/homocitrate synthase family. LeuA type 1 subfamily. In terms of assembly, homodimer. Mn(2+) serves as cofactor.

It localises to the cytoplasm. The catalysed reaction is 3-methyl-2-oxobutanoate + acetyl-CoA + H2O = (2S)-2-isopropylmalate + CoA + H(+). The protein operates within amino-acid biosynthesis; L-leucine biosynthesis; L-leucine from 3-methyl-2-oxobutanoate: step 1/4. In terms of biological role, catalyzes the condensation of the acetyl group of acetyl-CoA with 3-methyl-2-oxobutanoate (2-ketoisovalerate) to form 3-carboxy-3-hydroxy-4-methylpentanoate (2-isopropylmalate). This Escherichia coli O45:K1 (strain S88 / ExPEC) protein is 2-isopropylmalate synthase.